We begin with the raw amino-acid sequence, 427 residues long: Enolase (427 aa).

(2R)-2-phosphoglycerate is bound at residue Gln-163. Glu-205 (proton donor) is an active-site residue. Residues Asp-242, Glu-285, and Asp-312 each contribute to the Mg(2+) site. Residues Lys-337, Arg-366, Ser-367, and Lys-388 each coordinate (2R)-2-phosphoglycerate. Residue Lys-337 is the Proton acceptor of the active site.

The protein belongs to the enolase family. Mg(2+) is required as a cofactor.

It localises to the cytoplasm. The protein localises to the secreted. Its subcellular location is the cell surface. The catalysed reaction is (2R)-2-phosphoglycerate = phosphoenolpyruvate + H2O. The protein operates within carbohydrate degradation; glycolysis; pyruvate from D-glyceraldehyde 3-phosphate: step 4/5. Catalyzes the reversible conversion of 2-phosphoglycerate (2-PG) into phosphoenolpyruvate (PEP). It is essential for the degradation of carbohydrates via glycolysis. The chain is Enolase from Paraburkholderia phytofirmans (strain DSM 17436 / LMG 22146 / PsJN) (Burkholderia phytofirmans).